The primary structure comprises 158 residues: NADH-quinone oxidoreductase subunit B (158 aa).

[4Fe-4S] cluster-binding residues include cysteine 36, cysteine 37, cysteine 101, and cysteine 131.

Belongs to the complex I 20 kDa subunit family. NDH-1 is composed of 14 different subunits. Subunits NuoB, C, D, E, F, and G constitute the peripheral sector of the complex. [4Fe-4S] cluster serves as cofactor.

The protein localises to the cell inner membrane. It catalyses the reaction a quinone + NADH + 5 H(+)(in) = a quinol + NAD(+) + 4 H(+)(out). In terms of biological role, NDH-1 shuttles electrons from NADH, via FMN and iron-sulfur (Fe-S) centers, to quinones in the respiratory chain. The immediate electron acceptor for the enzyme in this species is believed to be ubiquinone. Couples the redox reaction to proton translocation (for every two electrons transferred, four hydrogen ions are translocated across the cytoplasmic membrane), and thus conserves the redox energy in a proton gradient. This chain is NADH-quinone oxidoreductase subunit B, found in Francisella tularensis subsp. tularensis (strain FSC 198).